Here is a 1260-residue protein sequence, read N- to C-terminus: Neural cell adhesion molecule L1 (1260 aa).

The N-terminal stretch at 1 to 19 (MVVMLRYVWPLLLCSPCLL) is a signal peptide. The Extracellular portion of the chain corresponds to 20-1123 (IQIPDEYKGH…VSTTGSFASE (1104 aa)). 6 consecutive Ig-like C2-type domains span residues 35–130 (PVIT…IQLV), 138–225 (PKET…EPID), 239–327 (PRLL…YYVT), 332–419 (PYWL…AYIY), 424–506 (PARI…NNVT), and 517–600 (TQIT…DEVE). 2 disulfide bridges follow: C57–C113 and C157–C208. N100, N202, N246, and N293 each carry an N-linked (GlcNAc...) asparagine glycan. Cystine bridges form between C263/C311 and C353/C403. Residues N432, N478, N489, and N504 are each glycosylated (N-linked (GlcNAc...) asparagine). C447 and C496 are disulfide-bonded. C538 and C590 are disulfide-bonded. 2 consecutive short sequence motifs (cell attachment site) follow at residues 553 to 555 (RGD) and 562 to 564 (RGD). N-linked (GlcNAc...) asparagine glycans are attached at residues N587 and N670. 5 Fibronectin type-III domains span residues 613 to 711 (PVPH…TPEA), 716 to 809 (NPVD…SGED), 811 to 916 (PQVS…PEGV), 919 to 1015 (HPEA…MALF), and 1014 to 1112 (LFGK…TGPV). Positions 697–724 (GEPSPVSESVVTPEAAPEKNPVDVRGEG) are disordered. Positions 712–724 (APEKNPVDVRGEG) are enriched in basic and acidic residues. N-linked (GlcNAc...) asparagine glycans are attached at residues N725, N776, N824, N848, N875, N968, N978, N1022, N1030, N1073, and N1107. Residues 1124-1146 (GWFIAFVSAIILLLLILLILCFI) form a helical membrane-spanning segment. Residues 1147 to 1260 (KRSKGGKYSV…SPINPAVALE (114 aa)) lie on the Cytoplasmic side of the membrane. Phosphoserine occurs at positions 1166, 1181, 1184, 1197, 1246, 1247, and 1251. Disordered stretches follow at residues 1183 to 1210 (ESDN…SDDS) and 1229 to 1260 (IGQY…VALE). The segment covering 1244-1253 (NDSSGATSPI) has biased composition (polar residues).

Belongs to the immunoglobulin superfamily. L1/neurofascin/NgCAM family. As to quaternary structure, interacts with SHTN1; the interaction occurs in axonal growth cones. Interacts with isoform 2 of BSG. Expressed in the brain, including in the molecular layer of the cerebellar cortex, the fiber-rich layers of the hippocampus (alveus, and strata lacunosum moleculare, radiatum, and oriens), the nerve fiber layer and the inner and outer plexiform layers of the retina, and in the molecular layer of the olfactory bulb (at protein level).

The protein localises to the cell membrane. Its subcellular location is the cell projection. The protein resides in the growth cone. Functionally, neural cell adhesion molecule involved in the dynamics of cell adhesion and in the generation of transmembrane signals at tyrosine kinase receptors. During brain development, critical in multiple processes, including neuronal migration, axonal growth and fasciculation, and synaptogenesis. In the mature brain, plays a role in the dynamics of neuronal structure and function, including synaptic plasticity. In Mus musculus (Mouse), this protein is Neural cell adhesion molecule L1 (L1cam).